Reading from the N-terminus, the 455-residue chain is Histone chaperone RTT106 (455 aa).

N-acetylserine is present on serine 2. Residues serine 2–isoleucine 67 form a dimeric region region. PH domains are found at residues serine 68–isoleucine 200 and isoleucine 217–lysine 301. Positions serine 68–lysine 301 are double PH domain. A compositionally biased stretch (basic and acidic residues) spans aspartate 305–alanine 314. Residues aspartate 305–aspartate 455 form a disordered region. The segment covering lysine 319 to glutamine 339 has biased composition (polar residues). Acidic residues-rich tracts occupy residues serine 350 to leucine 366 and aspartate 376 to glutamate 395. The span at alanine 402 to glutamine 418 shows a compositional bias: polar residues. Phosphoserine is present on residues serine 408 and serine 411. Positions leucine 420–leucine 429 are enriched in basic and acidic residues. The span at glutamate 430–aspartate 455 shows a compositional bias: acidic residues. Position 450 is a phosphoserine (serine 450).

It belongs to the RTT106 family. Homodimers (via the N-terminal domain). Interacts with the SWI/SNF complex. Interacts with the RSC complex. Interacts with the HIR complex. Interacts with the CAF-1 complex. Interacts with RLF2. Interacts with SIR4. Interacts with YTA7. Interacts with CAC2. Interacts with HPC2. Interacts with HIR2. Interacts with MSI1. Interacts with HIR1. Interacts with histone H3. Interacts with histone H4.

The protein localises to the nucleus. It is found in the chromosome. Histones H3 and H4 chaperone involved in the nucleosome formation and heterochromatin silencing. Required for the deposition of H3K56ac-carrying H3-H4 complex onto newly-replicated DNA. Plays a role in the transcriptional regulation of the cell-cycle dependent histone genes by directly recruiting the SWI/SNF and RSC chromatin remodeling complexes to the histone genes in a cell cycle dependent manner. In cooperation with HIR and ASF1, creates a repressive structure at the core histone gene promoter and contributes to their repression outside of S phase. Involved in regulation of Ty1 transposition. This Saccharomyces cerevisiae (strain ATCC 204508 / S288c) (Baker's yeast) protein is Histone chaperone RTT106.